The primary structure comprises 478 residues: UDP-N-acetylmuramate--L-alanine ligase (478 aa).

125 to 131 (GTHGKTT) is a binding site for ATP.

It belongs to the MurCDEF family.

The protein resides in the cytoplasm. It carries out the reaction UDP-N-acetyl-alpha-D-muramate + L-alanine + ATP = UDP-N-acetyl-alpha-D-muramoyl-L-alanine + ADP + phosphate + H(+). The protein operates within cell wall biogenesis; peptidoglycan biosynthesis. In terms of biological role, cell wall formation. This chain is UDP-N-acetylmuramate--L-alanine ligase, found in Dichelobacter nodosus (strain VCS1703A).